The chain runs to 524 residues: 2-isopropylmalate synthase (524 aa).

The Pyruvate carboxyltransferase domain occupies 15-277 (VVIFDTTMRD…ETKIDTTHIT (263 aa)). Positions 24, 212, 214, and 248 each coordinate Mn(2+). A regulatory domain region spans residues 401 to 524 (RVQRLRVVAG…RPEAAIASGF (124 aa)).

The protein belongs to the alpha-IPM synthase/homocitrate synthase family. LeuA type 1 subfamily. Homodimer. It depends on Mn(2+) as a cofactor.

It is found in the cytoplasm. It catalyses the reaction 3-methyl-2-oxobutanoate + acetyl-CoA + H2O = (2S)-2-isopropylmalate + CoA + H(+). The protein operates within amino-acid biosynthesis; L-leucine biosynthesis; L-leucine from 3-methyl-2-oxobutanoate: step 1/4. Its function is as follows. Catalyzes the condensation of the acetyl group of acetyl-CoA with 3-methyl-2-oxobutanoate (2-ketoisovalerate) to form 3-carboxy-3-hydroxy-4-methylpentanoate (2-isopropylmalate). This Caulobacter sp. (strain K31) protein is 2-isopropylmalate synthase.